The chain runs to 31 residues: U8-ctenitoxin-Co1a (31 aa).

Disulfide bonds link C4–C18 and C11–C24.

Expressed by the venom gland.

Its subcellular location is the secreted. Its function is as follows. Blocks voltage-gated sodium channels (Nav). This chain is U8-ctenitoxin-Co1a, found in Ctenus ornatus (Brazilian spider).